We begin with the raw amino-acid sequence, 291 residues long: Acetyl-coenzyme A carboxylase carboxyl transferase subunit beta (291 aa).

A CoA carboxyltransferase N-terminal domain is found at 29-291; it reads IMTKCPQCKK…TGGEREWLEN (263 aa). Zn(2+) contacts are provided by Cys-33, Cys-36, Cys-52, and Cys-55. The C4-type zinc-finger motif lies at 33–55; it reads CPQCKKIMLTKELDKNLRVCMNC.

The protein belongs to the AccD/PCCB family. In terms of assembly, acetyl-CoA carboxylase is a heterohexamer composed of biotin carboxyl carrier protein (AccB), biotin carboxylase (AccC) and two subunits each of ACCase subunit alpha (AccA) and ACCase subunit beta (AccD). It depends on Zn(2+) as a cofactor.

It localises to the cytoplasm. It carries out the reaction N(6)-carboxybiotinyl-L-lysyl-[protein] + acetyl-CoA = N(6)-biotinyl-L-lysyl-[protein] + malonyl-CoA. It functions in the pathway lipid metabolism; malonyl-CoA biosynthesis; malonyl-CoA from acetyl-CoA: step 1/1. In terms of biological role, component of the acetyl coenzyme A carboxylase (ACC) complex. Biotin carboxylase (BC) catalyzes the carboxylation of biotin on its carrier protein (BCCP) and then the CO(2) group is transferred by the transcarboxylase to acetyl-CoA to form malonyl-CoA. This Bacillus pumilus (strain SAFR-032) protein is Acetyl-coenzyme A carboxylase carboxyl transferase subunit beta.